A 497-amino-acid polypeptide reads, in one-letter code: Histone-lysine N-methyltransferase ASHR3 (497 aa).

The segment at Met-118 to Ala-186 adopts a PHD-type zinc-finger fold. One can recognise an AWS domain in the interval Asp-283 to Lys-326. One can recognise an SET domain in the interval Lys-326–Arg-443. Residues Pro-449–Gly-465 form the Post-SET domain.

This sequence belongs to the class V-like SAM-binding methyltransferase superfamily. Histone-lysine methyltransferase family. SET2 subfamily. Interacts with AMS/bHLH21 by its SET domain and PHD finger. Expressed in roots, flowers and buds, the anther and in stamen filaments.

It is found in the nucleus. The protein localises to the chromosome. It carries out the reaction L-lysyl-[histone] + S-adenosyl-L-methionine = N(6)-methyl-L-lysyl-[histone] + S-adenosyl-L-homocysteine + H(+). In terms of biological role, histone methyltransferase. Involved in stamen development. The sequence is that of Histone-lysine N-methyltransferase ASHR3 (ASHR3) from Arabidopsis thaliana (Mouse-ear cress).